A 312-amino-acid polypeptide reads, in one-letter code: Ribosomal RNA small subunit methyltransferase H (312 aa).

Residues 34-36 (AGH), D54, F81, D102, and Q109 each bind S-adenosyl-L-methionine.

The protein belongs to the methyltransferase superfamily. RsmH family.

It is found in the cytoplasm. It carries out the reaction cytidine(1402) in 16S rRNA + S-adenosyl-L-methionine = N(4)-methylcytidine(1402) in 16S rRNA + S-adenosyl-L-homocysteine + H(+). In terms of biological role, specifically methylates the N4 position of cytidine in position 1402 (C1402) of 16S rRNA. This Citrifermentans bemidjiense (strain ATCC BAA-1014 / DSM 16622 / JCM 12645 / Bem) (Geobacter bemidjiensis) protein is Ribosomal RNA small subunit methyltransferase H.